A 240-amino-acid polypeptide reads, in one-letter code: Transcriptional regulatory protein ChvI (240 aa).

The region spanning T3–L116 is the Response regulatory domain. The Mg(2+) site is built by D8, D9, and D52. D52 bears the 4-aspartylphosphate mark. The ompR/PhoB-type DNA-binding region spans S139–E238.

Mg(2+) is required as a cofactor. In terms of processing, phosphorylated by ChvG.

The protein resides in the cytoplasm. Its pathway is glycan metabolism; exopolysaccharide biosynthesis. In terms of biological role, member of a two-component regulatory system ChvG(ExoS)/ChvI involved in regulating the production of succinoglycan. This is Transcriptional regulatory protein ChvI (chvI) from Rhizobium meliloti (strain 1021) (Ensifer meliloti).